Here is a 361-residue protein sequence, read N- to C-terminus: Mannonate dehydratase 1 (361 aa).

Belongs to the mannonate dehydratase family. It depends on Fe(2+) as a cofactor. Mn(2+) is required as a cofactor.

The enzyme catalyses D-mannonate = 2-dehydro-3-deoxy-D-gluconate + H2O. It participates in carbohydrate metabolism; pentose and glucuronate interconversion. In terms of biological role, catalyzes the dehydration of D-mannonate. This is Mannonate dehydratase 1 (uxuA1) from Halalkalibacterium halodurans (strain ATCC BAA-125 / DSM 18197 / FERM 7344 / JCM 9153 / C-125) (Bacillus halodurans).